The sequence spans 424 residues: Serpin A11 (424 aa).

The first 21 residues, 1–21 (MGPVWLWLWLLVAEVLLPVHC), serve as a signal peptide directing secretion. N-linked (GlcNAc...) asparagine glycosylation is found at Asn108, Asn171, Asn352, and Asn387.

Belongs to the serpin family.

The protein resides in the secreted. In Mus musculus (Mouse), this protein is Serpin A11 (Serpina11).